We begin with the raw amino-acid sequence, 358 residues long: Src kinase-associated phosphoprotein 2 (358 aa).

Phosphoserine occurs at positions 6 and 9. The segment at 60–108 is disordered; the sequence is PQEFQDKGDAEEGDEYDDPFAGPPDTISLASERYDKDDDGPSDGNQFPP. Tyr75 bears the Phosphotyrosine mark. Ser87 and Ser90 each carry phosphoserine. Residues 116 to 219 enclose the PH domain; that stretch reads FVIKAGYLEK…WVQQLKFILQ (104 aa). Phosphotyrosine is present on residues Tyr151 and Tyr197. The residue at position 223 (Ser223) is a Phosphoserine. The disordered stretch occupies residues 227–293; it reads PEDEDEKGDL…DSVQHPSGDK (67 aa). Residues 243–253 show a composition bias toward low complexity; it reads PVPVSSPQRSQ. The segment covering 255 to 270 has biased composition (acidic residues); the sequence is IDDEIYEELPEEEEDT. Tyr260 carries the post-translational modification Phosphotyrosine. Ser272, Ser282, and Ser285 each carry phosphoserine. A compositionally biased stretch (basic and acidic residues) spans 274 to 293; sequence KMDEQGKGSRDSVQHPSGDK. An SH3 domain is found at 296–357; the sequence is DYANFYQGLW…PKAYLMEMYD (62 aa).

This sequence belongs to the SKAP family. In terms of assembly, interacts with FYB1, which is required for SKAP2 protein stability. Interacts with PTPNS1. Part of a complex consisting of SKAP2, FYB1 and PTPNS1. Part of a complex consisting of SKAP2, FYB1 and LILRB3. Interacts with LAT, GRB2, PTK2B, and PRAM1. May interact with actin. May interact with FYN, HCK and LYN. Interacts with FASLG.

It localises to the cytoplasm. Functionally, may be involved in B-cell and macrophage adhesion processes. In B-cells, may act by coupling the B-cell receptor (BCR) to integrin activation. May play a role in src signaling pathway. The chain is Src kinase-associated phosphoprotein 2 (Skap2) from Rattus norvegicus (Rat).